The chain runs to 62 residues: Ferredoxin-1 (62 aa).

4Fe-4S ferredoxin-type domains follow at residues 2–28 (ALYI…SAGS) and 29–62 (EIYV…IVQG). [4Fe-4S] cluster-binding residues include C9, C12, C15, C19, C38, C41, C50, and C54.

It depends on [4Fe-4S] cluster as a cofactor.

In terms of biological role, ferredoxins are iron-sulfur proteins that transfer electrons in a wide variety of metabolic reactions. In Chlorobaculum tepidum (strain ATCC 49652 / DSM 12025 / NBRC 103806 / TLS) (Chlorobium tepidum), this protein is Ferredoxin-1.